We begin with the raw amino-acid sequence, 267 residues long: Hydroxyacylglutathione hydrolase (267 aa).

His55, His57, Asp59, His60, His121, Asp138, and His176 together coordinate Zn(2+).

It belongs to the metallo-beta-lactamase superfamily. Glyoxalase II family. In terms of assembly, monomer. Zn(2+) is required as a cofactor.

The enzyme catalyses an S-(2-hydroxyacyl)glutathione + H2O = a 2-hydroxy carboxylate + glutathione + H(+). The protein operates within secondary metabolite metabolism; methylglyoxal degradation; (R)-lactate from methylglyoxal: step 2/2. In terms of biological role, thiolesterase that catalyzes the hydrolysis of S-D-lactoyl-glutathione to form glutathione and D-lactic acid. The protein is Hydroxyacylglutathione hydrolase of Shewanella sp. (strain ANA-3).